Consider the following 417-residue polypeptide: Gamma-glutamyl phosphate reductase (417 aa).

It belongs to the gamma-glutamyl phosphate reductase family.

The protein resides in the cytoplasm. The enzyme catalyses L-glutamate 5-semialdehyde + phosphate + NADP(+) = L-glutamyl 5-phosphate + NADPH + H(+). The protein operates within amino-acid biosynthesis; L-proline biosynthesis; L-glutamate 5-semialdehyde from L-glutamate: step 2/2. Catalyzes the NADPH-dependent reduction of L-glutamate 5-phosphate into L-glutamate 5-semialdehyde and phosphate. The product spontaneously undergoes cyclization to form 1-pyrroline-5-carboxylate. The protein is Gamma-glutamyl phosphate reductase of Proteus mirabilis (strain HI4320).